The chain runs to 505 residues: Maturase K (505 aa).

This sequence belongs to the intron maturase 2 family. MatK subfamily.

Its subcellular location is the plastid. The protein localises to the chloroplast. Its function is as follows. Usually encoded in the trnK tRNA gene intron. Probably assists in splicing its own and other chloroplast group II introns. The chain is Maturase K from Apocynum androsaemifolium (Spreading dogbane).